A 281-amino-acid polypeptide reads, in one-letter code: Leukocyte antigen CD37 (281 aa).

The Cytoplasmic portion of the chain corresponds to 1–17 (MSAQESCLSLIKYFLFV). A helical membrane pass occupies residues 18–38 (FNLFFFVLGGLIFCFGTWILI). At 39–59 (DKTSFVSFVGLSFVPLQTWSK) the chain is on the extracellular side. The chain crosses the membrane as a helical span at residues 60 to 74 (VLAVSGVLTMALALL). Residues 75–85 (GCVGALKELRC) are Cytoplasmic-facing. The chain crosses the membrane as a helical span at residues 86 to 111 (LLGLYFGMLLLLFATQITLGILISTQ). Topologically, residues 112-241 (RVRLERRVQE…QSLQKWLHNN (130 aa)) are extracellular. N-linked (GlcNAc...) asparagine glycans are attached at residues asparagine 170, asparagine 183, and asparagine 188. Residues 242-266 (IISIVGICLGVGLLELGFMTLSIFL) form a helical membrane-spanning segment. Residues 267 to 281 (CRNLDHVYDRLARYR) are Cytoplasmic-facing.

This sequence belongs to the tetraspanin (TM4SF) family. As to quaternary structure, interacts with SCIMP. Interacts with SOCS3. Interacts with DECTIN1/CLEC7A. Post-translationally, tyrosine phosphorylated; leading to activation of downstream signaling pathways.

Its subcellular location is the cell membrane. Its function is as follows. Structural component of specialized membrane microdomains known as tetraspanin-enriched microdomains (TERMs), which act as platforms for receptor clustering and signaling. Participates thereby in diverse biological functions such as cell signal transduction, adhesion, migration and protein trafficking. Upon ligand binding, two signaling pathways are activated, one acting through phosphorylation by LYN leading to cell death or a survival pathway with activation of GSK3B. Plays an essential role for clustering of integrin ITGA4/ITGB1 and promotes its mobility in the plasma membrane of B-cells. In turn, participates in ITGA4/ITGB1 integrin-mediated antiapoptotic signaling through AKT. Also plays a role in the migration of dendritic cells and neutrophils to draining lymph nodes, as well as in their integrin-mediated adhesion. Negatively regulates IL-6 responses through direct interaction with SOCS3 thereby preventing constitutive IL-6 signaling. Alternatively, inhibition of IL-6 signaling can also occur via interaction and stabilization of DECTIN1/CLEC7A at the cell membrane to inhibit its ability to promote the production of IL-6. The polypeptide is Leukocyte antigen CD37 (Cd37) (Mus musculus (Mouse)).